Reading from the N-terminus, the 576-residue chain is uncharacterized protein (576 aa).

Residues aspartate 241–alanine 261 show a composition bias toward polar residues. The segment at aspartate 241–proline 270 is disordered.

This is an uncharacterized protein from Bacillus subtilis (strain 168).